Here is a 164-residue protein sequence, read N- to C-terminus: HTH-type transcriptional regulator IscR (164 aa).

Residues 2–131 (RLTSKGRYAV…GSISLEELVK (130 aa)) form the HTH rrf2-type domain. A DNA-binding region (H-T-H motif) is located at residues 28–51 (LADISERQGISLSYLEQLFSRLRK). Residues Cys92, Cys98, and Cys104 each coordinate [2Fe-2S] cluster. The segment at 140–164 (DRQDSDKRRTPNGRPQETINVNLRA) is disordered. Polar residues predominate over residues 152–164 (GRPQETINVNLRA).

[2Fe-2S] cluster is required as a cofactor.

In terms of biological role, regulates the transcription of several operons and genes involved in the biogenesis of Fe-S clusters and Fe-S-containing proteins. The chain is HTH-type transcriptional regulator IscR from Xenorhabdus nematophila (strain ATCC 19061 / DSM 3370 / CCUG 14189 / LMG 1036 / NCIMB 9965 / AN6).